We begin with the raw amino-acid sequence, 326 residues long: ATP synthase subunit b 2 (326 aa).

The chain crosses the membrane as a helical span at residues 2–22 (LIDWFTVVAQALNFLILVWLL). Basic and acidic residues-rich tracts occupy residues 275 to 298 (QQGRKEGRAVQNWDKAESEIRKEN) and 306 to 326 (PPPEAKAKPKPEEPKPEIGSP). Residues 275 to 326 (QQGRKEGRAVQNWDKAESEIRKENLSPAKTEPPPEAKAKPKPEEPKPEIGSP) are disordered.

It belongs to the ATPase B chain family. F-type ATPases have 2 components, F(1) - the catalytic core - and F(0) - the membrane proton channel. F(1) has five subunits: alpha(3), beta(3), gamma(1), delta(1), epsilon(1). F(0) has three main subunits: a(1), b(2) and c(10-14). The alpha and beta chains form an alternating ring which encloses part of the gamma chain. F(1) is attached to F(0) by a central stalk formed by the gamma and epsilon chains, while a peripheral stalk is formed by the delta and b chains.

Its subcellular location is the cell inner membrane. F(1)F(0) ATP synthase produces ATP from ADP in the presence of a proton or sodium gradient. F-type ATPases consist of two structural domains, F(1) containing the extramembraneous catalytic core and F(0) containing the membrane proton channel, linked together by a central stalk and a peripheral stalk. During catalysis, ATP synthesis in the catalytic domain of F(1) is coupled via a rotary mechanism of the central stalk subunits to proton translocation. In terms of biological role, component of the F(0) channel, it forms part of the peripheral stalk, linking F(1) to F(0). The chain is ATP synthase subunit b 2 from Albidiferax ferrireducens (strain ATCC BAA-621 / DSM 15236 / T118) (Rhodoferax ferrireducens).